A 217-amino-acid chain; its full sequence is Adapter protein MecA (217 aa).

This sequence belongs to the MecA family. In terms of assembly, homodimer.

In terms of biological role, enables the recognition and targeting of unfolded and aggregated proteins to the ClpC protease or to other proteins involved in proteolysis. The protein is Adapter protein MecA of Listeria welshimeri serovar 6b (strain ATCC 35897 / DSM 20650 / CCUG 15529 / CIP 8149 / NCTC 11857 / SLCC 5334 / V8).